The chain runs to 262 residues: LysM domain-containing protein ARB_03438 (262 aa).

The N-terminal stretch at Met1–Ala22 is a signal peptide. Residues Phe31 to Leu75 form the LysM 1 domain. Residues Thr85–Thr112 are disordered. Positions Ala86 to Thr112 are enriched in polar residues. One can recognise a LysM 2 domain in the interval Phe132–Thr179. The disordered stretch occupies residues Gly184–Pro240. Residues Pro197 to Ser214 show a composition bias toward low complexity. The span at Gln215–Gln226 shows a compositional bias: pro residues. Low complexity predominate over residues Pro227–Pro240. Residue Asn233 is glycosylated (N-linked (GlcNAc...) asparagine).

It is found in the secreted. Functionally, might have a role in sequestration of chitin oligosaccharides (breakdown products of fungal cell walls that are released during invasion and act as triggers of host immunity) to dampen host defense. The chain is LysM domain-containing protein ARB_03438 from Arthroderma benhamiae (strain ATCC MYA-4681 / CBS 112371) (Trichophyton mentagrophytes).